We begin with the raw amino-acid sequence, 315 residues long: Cyclin-dependent kinase B2-2 (315 aa).

The Protein kinase domain occupies 16–306; it reads FEKLEKVGEG…AKKAMEHPYF (291 aa). Residues 22–30 and lysine 45 each bind ATP; that span reads VGEGTYGKV. Tyrosine 27 carries the post-translational modification Phosphotyrosine. The Proton acceptor role is filled by aspartate 147. Threonine 181 is subject to Phosphothreonine.

It belongs to the protein kinase superfamily. CMGC Ser/Thr protein kinase family. CDC2/CDKX subfamily. In terms of tissue distribution, expressed in flowers.

It carries out the reaction L-seryl-[protein] + ATP = O-phospho-L-seryl-[protein] + ADP + H(+). The catalysed reaction is L-threonyl-[protein] + ATP = O-phospho-L-threonyl-[protein] + ADP + H(+). The enzyme catalyses [DNA-directed RNA polymerase] + ATP = phospho-[DNA-directed RNA polymerase] + ADP + H(+). The protein is Cyclin-dependent kinase B2-2 (CDKB2-2) of Arabidopsis thaliana (Mouse-ear cress).